Consider the following 723-residue polypeptide: MSDQKAITSEQEMKAYRVQGFTCANCAGKFEKNVKQLSGVEDAKVNFGASKIAVYGNATIEELEKAGAFENLKVTPEKSARQASQEVKEDTKEDKVPFYKKHSTLLYASLLIAFGYLSSYVNGEENIVTTLLFLASMFIGGLSLFKVGLQNLLRFEFDMKTLMTVAVIGGAIIGEWAEVAIVVILFAISEALERFSMDRARQSIRSLMDIAPKEALVKRNGQEIMIHVDDIAVGDIMIVKPGQKIAMDGVVVSGYSAVNQAAITGESVPVEKTVDNEVFAGTLNEEGLLEVEITKLVEDTTISKIIHLVEEAQGERAPSQAFVDKFAKYYTPIIMIIAALVAIVPPLFFDGSWETWIYQGLAVLVVGCPCALVISTPISIVSAIGNAAKKGVLVKGGVYLEEMGALKAIAFDKTGTLTKGVPAVTDYNVLNKQINEKELLSIITALEYRSQHPLASAIMKKAEEENITYSDVQVEDFSSITGKGIKGIVNGTTYYIGSPKLFKELLTNDFDKDLEQNVTTLQNQGKTAMIIGTEKEILAVIAVADEVRESSKEILQKLHQLGIKKTIMLTGDNKGTANAIGGQVGVSDIEAELMPQDKLDFIKQLRSEYGNVAMVGDGVNDAPALAASTVGIAMGGAGTDTALETADVALMGDDLRKLPFTVKLSRKTLNIIKANITFAIAIKFIALLLVIPGWLTLWIAILSDMGATLLVALNGLRLMRVKE.

One can recognise an HMA domain in the interval 12–75 (EMKAYRVQGF…AGAFENLKVT (64 aa)). Cd(2+) contacts are provided by C23 and C26. Transmembrane regions (helical) follow at residues 103–123 (STLL…YVNG), 127–147 (IVTT…LFKV), 168–188 (IGGA…LFAI), 329–349 (YYTP…PLFF), and 361–381 (LAVL…ISIV). D412 acts as the 4-aspartylphosphate intermediate in catalysis. Helical transmembrane passes span 671–690 (IIKA…LLLV) and 694–716 (WLTL…LNGL).

Belongs to the cation transport ATPase (P-type) (TC 3.A.3) family. Type IB subfamily.

It is found in the cell membrane. It catalyses the reaction Cd(2+)(in) + ATP + H2O = Cd(2+)(out) + ADP + phosphate + H(+). Functionally, couples the hydrolysis of ATP with the export of cadmium. This chain is Probable cadmium-transporting ATPase (cadA), found in Alkalihalophilus pseudofirmus (strain ATCC BAA-2126 / JCM 17055 / OF4) (Bacillus pseudofirmus).